Reading from the N-terminus, the 236-residue chain is UPF0257 lipoprotein YnfC (236 aa).

A signal peptide spans 1-16 (MKKPLLLTLLCMILAG). Residue Cys17 is the site of N-palmitoyl cysteine attachment. The S-diacylglycerol cysteine moiety is linked to residue Cys17.

Belongs to the UPF0257 family.

It localises to the cell membrane. In Salmonella schwarzengrund (strain CVM19633), this protein is UPF0257 lipoprotein YnfC.